We begin with the raw amino-acid sequence, 156 residues long: Small ribosomal subunit protein uS7 (156 aa).

This sequence belongs to the universal ribosomal protein uS7 family. Part of the 30S ribosomal subunit. Contacts proteins S9 and S11.

In terms of biological role, one of the primary rRNA binding proteins, it binds directly to 16S rRNA where it nucleates assembly of the head domain of the 30S subunit. Is located at the subunit interface close to the decoding center, probably blocks exit of the E-site tRNA. This is Small ribosomal subunit protein uS7 from Methylocella silvestris (strain DSM 15510 / CIP 108128 / LMG 27833 / NCIMB 13906 / BL2).